A 238-amino-acid chain; its full sequence is Cysteine-rich venom protein pseudechetoxin-like (238 aa).

The first 19 residues, 1 to 19 (MIAFTVLLSLAAVLQQSSG), serve as a signal peptide directing secretion. The propeptide occupies 20 to 28 (TVDFASESS). In terms of domain architecture, SCP spans 38–164 (VDKHNDLRRS…STKYLYVCQY (127 aa)). 8 disulfide bridges follow: Cys-75-Cys-153, Cys-92-Cys-165, Cys-148-Cys-162, Cys-184-Cys-191, Cys-187-Cys-196, Cys-200-Cys-233, Cys-209-Cys-227, and Cys-218-Cys-231. The 34-residue stretch at 200–233 (CKHNNDFSNCKALAKKSKCQTEWIKSKCPATCFC) folds into the ShKT domain.

It belongs to the CRISP family. Expressed by the venom gland.

It localises to the secreted. In terms of biological role, blocks olfactory (CNGA2) and retinal (CNGA1) CNG channel currents. Does not affect neither depolarization- nor caffeine-induced contraction of smooth muscle. In Oxyuranus scutellatus scutellatus (Australian taipan), this protein is Cysteine-rich venom protein pseudechetoxin-like.